A 1181-amino-acid polypeptide reads, in one-letter code: Poly [ADP-ribose] polymerase tankyrase (1181 aa).

ANK repeat units follow at residues Arg-56–Ala-85, Gly-89–Thr-118, Trp-122–Ile-151, Arg-209–Ala-238, Gly-242–Ala-271, Trp-275–Leu-304, Thr-362–Glu-394, Ala-398–Ala-427, Leu-431–Ile-458, Asp-483–Cys-513, Arg-519–Ala-548, Gly-552–Val-581, Trp-585–Lys-614, Arg-638–Asp-668, Arg-672–Ala-701, Gly-705–Ala-734, Trp-738–Met-767, and Glu-771–Gln-799. 2 disordered regions span residues Ser-807 to Leu-834 and Arg-864 to Pro-886. An SAM domain is found at Asp-889–Thr-952. The PARP catalytic domain occupies Leu-969 to Ser-1174. The Zn(2+) site is built by Cys-1091, His-1094, Cys-1099, and Cys-1102.

It belongs to the ARTD/PARP family. In terms of assembly, interacts (via ANK repeats) with PI31.

It carries out the reaction NAD(+) + (ADP-D-ribosyl)n-acceptor = nicotinamide + (ADP-D-ribosyl)n+1-acceptor + H(+).. The enzyme catalyses L-aspartyl-[protein] + NAD(+) = 4-O-(ADP-D-ribosyl)-L-aspartyl-[protein] + nicotinamide. The catalysed reaction is L-glutamyl-[protein] + NAD(+) = 5-O-(ADP-D-ribosyl)-L-glutamyl-[protein] + nicotinamide. Stimulates proteasome activity, probably by ADP-ribosylation of PI31. Modulates 26S proteasome assembly. This Drosophila melanogaster (Fruit fly) protein is Poly [ADP-ribose] polymerase tankyrase.